Here is a 362-residue protein sequence, read N- to C-terminus: Adenosine deaminase (362 aa).

Zn(2+) is bound by residues His41 and His43. 43 to 45 (HLD) contributes to the a purine D-ribonucleoside binding site. The interval 169–183 (IGETGISEESLRKAA) is gating helix loop; regulates binding affinity for substrates and thus substrate selectivity. Gly200 serves as a coordination point for a purine D-ribonucleoside. His225 contacts Zn(2+). The a purine D-ribonucleoside site is built by Glu228, His252, and Asp309. Asp309 is a Zn(2+) binding site.

This sequence belongs to the metallo-dependent hydrolases superfamily. Adenosine and AMP deaminases family. Requires Zn(2+) as cofactor.

The enzyme catalyses adenosine + H2O + H(+) = inosine + NH4(+). It participates in purine metabolism; purine nucleoside salvage. With respect to regulation, inhibited by coformycin but not by methylthiocoformycin (MT-coformycin). Functionally, catalyzes the hydrolytic deamination of adenosine to produce inosine. Unlike other Plasmodium adenosine deaminases, does not catalyze the deamination of 5'-methylthioadenosine (MTA). Plays an essential role in the purine salvage pathway which allows the parasite to use host cell purines for the synthesis of nucleic acids. The chain is Adenosine deaminase from Plasmodium gallinaceum.